Consider the following 701-residue polypeptide: ABC transporter G family member 23 (701 aa).

An ABC transporter domain is found at 7–237 (INLNNVSRSY…YECSLLEDVY (231 aa)). Residue 39–46 (GSSGSGKT) coordinates ATP. Transmembrane regions (helical) follow at residues 335–355 (FPLV…FLAI), 493–513 (FLAP…FLSI), 541–561 (HILA…LIAV), 574–596 (LIYL…ISLI), 608–628 (LAIF…EAII), and 665–685 (LIII…STPI). The ABC transmembrane type-2 domain maps to 459-686 (FQKAFNKIAN…SLIVISTPIG (228 aa)).

It belongs to the ABC transporter superfamily. ABCG family.

The protein localises to the membrane. The protein is ABC transporter G family member 23 (abcG23) of Dictyostelium discoideum (Social amoeba).